Here is a 166-residue protein sequence, read N- to C-terminus: FMN reductase (NADH) RutF (166 aa).

It belongs to the non-flavoprotein flavin reductase family. RutF subfamily.

It catalyses the reaction FMNH2 + NAD(+) = FMN + NADH + 2 H(+). Its function is as follows. Catalyzes the reduction of FMN to FMNH2 which is used to reduce pyrimidine by RutA via the Rut pathway. This is FMN reductase (NADH) RutF from Cronobacter sakazakii (strain ATCC BAA-894) (Enterobacter sakazakii).